Reading from the N-terminus, the 140-residue chain is Trafficking protein particle complex subunit 2-like protein (140 aa).

It belongs to the TRAPP small subunits family. Sedlin subfamily.

This Dictyostelium discoideum (Social amoeba) protein is Trafficking protein particle complex subunit 2-like protein (trappc2l).